Consider the following 337-residue polypeptide: Geranylgeranyl pyrophosphate synthase subD (337 aa).

3 residues coordinate isopentenyl diphosphate: Lys-53, Arg-56, and His-85. Mg(2+)-binding residues include Asp-92 and Asp-96. Arg-101 contributes to the dimethylallyl diphosphate binding site. An isopentenyl diphosphate-binding site is contributed by Arg-102. The dimethylallyl diphosphate site is built by Lys-179, Thr-180, and Gln-219. A Mg(2+)-binding site is contributed by Asp-222. 3 residues coordinate dimethylallyl diphosphate: Asn-226, Lys-236, and Lys-246.

The protein belongs to the FPP/GGPP synthase family. It depends on Mg(2+) as a cofactor.

The catalysed reaction is isopentenyl diphosphate + dimethylallyl diphosphate = (2E)-geranyl diphosphate + diphosphate. It carries out the reaction isopentenyl diphosphate + (2E)-geranyl diphosphate = (2E,6E)-farnesyl diphosphate + diphosphate. It catalyses the reaction isopentenyl diphosphate + (2E,6E)-farnesyl diphosphate = (2E,6E,10E)-geranylgeranyl diphosphate + diphosphate. It functions in the pathway secondary metabolite biosynthesis; terpenoid biosynthesis. Functionally, geranylgeranyl pyrophosphate synthase; part of the gene cluster that mediates the biosynthesis of the immunosuppressants subglutinols, meroterpenoids consisting of an alpha-pyrone (4-hydroxy-5,6-dimethyl-2-pyrone) moiety attached to a decalin core fused to a five-membered cyclic ether carrying a prenylside chain. The first step of the pathway is the synthesis of the alpha-pyrone moiety by the polyketide synthase subA via condensation of one acetyl-CoA starter unit with 3 malonyl-CoA units and 2 methylations. The alpha-pyrone is then combined with geranylgeranyl pyrophosphate (GGPP) formed by the GGPP synthase subD through the action of the prenyltransferase subC to yield a linear alpha-pyrone diterpenoid. Subsequent steps in the subglutinol biosynthetic pathway involve the decalin core formation, which is thought to be initiated by the epoxidation of the C10-C11 olefin by the FAD-dependent oxidoreductase subE. The following cyclization cascade would be catalyzed by the terpene cyclase subB. Lastly, the FAD-dependent dehydrogenase subF probably catalyzes the five-membered cyclic ether formation to complete the formation of subglutinol A. Subsequent redox reactions appear to give rise to subglutinol C and D, however, it remains unclear which enzymes are responsible for these transformations. SubD may have secondary function in the conversion of the identified subglutinols to subglutinol analog 45, which seems to be the major product of the cluster. The protein is Geranylgeranyl pyrophosphate synthase subD of Metarhizium robertsii (strain ARSEF 23 / ATCC MYA-3075) (Metarhizium anisopliae (strain ARSEF 23)).